A 341-amino-acid polypeptide reads, in one-letter code: Glucokinase (341 aa).

7–12 is an ATP binding site; it reads GDIGGT.

The protein belongs to the bacterial glucokinase family.

It localises to the cytoplasm. The catalysed reaction is D-glucose + ATP = D-glucose 6-phosphate + ADP + H(+). This chain is Glucokinase, found in Nostoc punctiforme (strain ATCC 29133 / PCC 73102).